Here is a 146-residue protein sequence, read N- to C-terminus: Stress enhanced protein 1, chloroplastic (146 aa).

A chloroplast-targeting transit peptide spans 1–73; sequence MALSQVSASL…GNRAASVSIR (73 aa). 2 helical membrane-spanning segments follow: residues 84 to 104 and 120 to 140; these read LDIW…TVEI and LPTV…VFIF.

The protein belongs to the ELIP/psbS family.

The protein resides in the plastid. Its subcellular location is the chloroplast thylakoid membrane. Functionally, may be involved in non-photochemical quenching, a process that maintains the balance between dissipation and utilization of light energy to minimize generation of oxidizing molecules, thereby protecting the plant against photo-oxidative damage. May play a photoprotective role in the thylakoid membrane in response to light stress. This is Stress enhanced protein 1, chloroplastic from Arabidopsis thaliana (Mouse-ear cress).